The primary structure comprises 457 residues: Flavohemoprotein-2 (457 aa).

The 156-residue stretch at 2–157 (ALSEDTIKAV…LADLLIKREE (156 aa)) folds into the Globin domain. H106 contacts heme b. Residues Y116 and E156 each act as charge relay system in the active site. A reductase region spans residues 168–456 (GGWRQTRTFR…FEMFGPFKAS (289 aa)). One can recognise an FAD-binding FR-type domain in the interval 171–278 (RQTRTFRVEE…APPYGDFFLR (108 aa)). FAD contacts are provided by residues Y210 and 227-230 (RQYS). 320–325 (GIGQTP) contacts NADP(+). Position 449–452 (449–452 (MFGP)) interacts with FAD.

The protein belongs to the globin family. Two-domain flavohemoproteins subfamily. This sequence in the C-terminal section; belongs to the flavoprotein pyridine nucleotide cytochrome reductase family. Monomer. Requires heme b as cofactor. It depends on FAD as a cofactor.

It carries out the reaction 2 nitric oxide + NADPH + 2 O2 = 2 nitrate + NADP(+) + H(+). The catalysed reaction is 2 nitric oxide + NADH + 2 O2 = 2 nitrate + NAD(+) + H(+). In terms of biological role, flavohemoprotein involved in nitric oxide (NO) detoxification in an aerobic process, termed nitric oxide dioxygenase (NOD) reaction that utilizes O(2) and NAD(P)H to convert NO to nitrate, which protects the protozoan parasite from various noxious nitrogen compounds. Therefore, plays a central role in the inducible response to nitrosative stress. May also be involved in O(2) detoxification. In Giardia intestinalis (strain P15) (Giardia lamblia), this protein is Flavohemoprotein-2 (hmpA-2).